A 175-amino-acid polypeptide reads, in one-letter code: Inorganic pyrophosphatase (175 aa).

The substrate site is built by K30, R44, and Y56. 3 residues coordinate Mg(2+): D66, D71, and D103. Residue Y142 coordinates substrate.

The protein belongs to the PPase family. In terms of assembly, homohexamer. Requires Mg(2+) as cofactor.

It is found in the cytoplasm. It carries out the reaction diphosphate + H2O = 2 phosphate + H(+). Functionally, catalyzes the hydrolysis of inorganic pyrophosphate (PPi) forming two phosphate ions. In Yersinia pestis, this protein is Inorganic pyrophosphatase.